A 172-amino-acid polypeptide reads, in one-letter code: ATP synthase subunit b (172 aa).

A helical membrane pass occupies residues 5–24; the sequence is LLMLLLLGSVSLFANEAAAS.

Belongs to the ATPase B chain family. As to quaternary structure, F-type ATPases have 2 components, F(1) - the catalytic core - and F(0) - the membrane proton channel. F(1) has five subunits: alpha(3), beta(3), gamma(1), delta(1), epsilon(1). F(0) has three main subunits: a(1), b(2) and c(10-14). The alpha and beta chains form an alternating ring which encloses part of the gamma chain. F(1) is attached to F(0) by a central stalk formed by the gamma and epsilon chains, while a peripheral stalk is formed by the delta and b chains.

It is found in the cell inner membrane. Functionally, f(1)F(0) ATP synthase produces ATP from ADP in the presence of a proton or sodium gradient. F-type ATPases consist of two structural domains, F(1) containing the extramembraneous catalytic core and F(0) containing the membrane proton channel, linked together by a central stalk and a peripheral stalk. During catalysis, ATP synthesis in the catalytic domain of F(1) is coupled via a rotary mechanism of the central stalk subunits to proton translocation. Component of the F(0) channel, it forms part of the peripheral stalk, linking F(1) to F(0). The polypeptide is ATP synthase subunit b (Nitratiruptor sp. (strain SB155-2)).